Consider the following 57-residue polypeptide: Large ribosomal subunit protein bL32 (57 aa).

The span at 1 to 19 (MATPKFKKSRANTHSRRSQ) shows a compositional bias: basic residues. Residues 1 to 20 (MATPKFKKSRANTHSRRSQW) form a disordered region.

This sequence belongs to the bacterial ribosomal protein bL32 family.

The protein is Large ribosomal subunit protein bL32 of Corynebacterium aurimucosum (strain ATCC 700975 / DSM 44827 / CIP 107346 / CN-1) (Corynebacterium nigricans).